The following is a 412-amino-acid chain: L-cysteine:1D-myo-inositol 2-amino-2-deoxy-alpha-D-glucopyranoside ligase (412 aa).

Position 43 (Cys43) interacts with Zn(2+). L-cysteinyl-5'-AMP contacts are provided by residues 43 to 46 (CGIT), Thr58, and 81 to 83 (NVT). The 'HIGH' region signature appears at 45-55 (ITPYDATHLGH). The 'ERGGDP' region signature appears at 187 to 192 (ERGGDP). Trp227 is an L-cysteinyl-5'-AMP binding site. Cys231 provides a ligand contact to Zn(2+). 249–251 (GSD) provides a ligand contact to L-cysteinyl-5'-AMP. Residue His256 coordinates Zn(2+). Ile283 serves as a coordination point for L-cysteinyl-5'-AMP. The 'KMSKS' region signature appears at 289 to 293 (KMSKS).

It belongs to the class-I aminoacyl-tRNA synthetase family. MshC subfamily. Monomer. Zn(2+) is required as a cofactor.

The enzyme catalyses 1D-myo-inositol 2-amino-2-deoxy-alpha-D-glucopyranoside + L-cysteine + ATP = 1D-myo-inositol 2-(L-cysteinylamino)-2-deoxy-alpha-D-glucopyranoside + AMP + diphosphate + H(+). In terms of biological role, catalyzes the ATP-dependent condensation of GlcN-Ins and L-cysteine to form L-Cys-GlcN-Ins. The polypeptide is L-cysteine:1D-myo-inositol 2-amino-2-deoxy-alpha-D-glucopyranoside ligase (Saccharopolyspora erythraea (strain ATCC 11635 / DSM 40517 / JCM 4748 / NBRC 13426 / NCIMB 8594 / NRRL 2338)).